The chain runs to 192 residues: Protein CREG1 (192 aa).

Residues 1–18 (MVLLAFLCAAALAALARG) form the signal peptide. N-linked (GlcNAc...) asparagine glycans are attached at residues Asn-95, Asn-133, and Asn-166.

It belongs to the CREG family.

The protein localises to the secreted. In terms of biological role, may contribute to the transcriptional control of cell growth and differentiation. The polypeptide is Protein CREG1 (CREG1) (Gallus gallus (Chicken)).